A 175-amino-acid polypeptide reads, in one-letter code: NADH-ubiquinone oxidoreductase chain 6 (175 aa).

A run of 5 helical transmembrane segments spans residues 1–21 (MMTYIVFILSIVFVMSFVGFA), 25–45 (SPIYGGLVLIISGGIGCAIVL), 47–67 (FGGSFLGLMVFLIYLGGMLVV), 88–108 (AVLAAFITGLLSELLTACYIL), and 149–169 (YGTWLVVVTGWSLLIGVLVIM).

Belongs to the complex I subunit 6 family. Core subunit of respiratory chain NADH dehydrogenase (Complex I) which is composed of 45 different subunits.

It localises to the mitochondrion inner membrane. The enzyme catalyses a ubiquinone + NADH + 5 H(+)(in) = a ubiquinol + NAD(+) + 4 H(+)(out). In terms of biological role, core subunit of the mitochondrial membrane respiratory chain NADH dehydrogenase (Complex I) which catalyzes electron transfer from NADH through the respiratory chain, using ubiquinone as an electron acceptor. Essential for the catalytic activity and assembly of complex I. This Canis lupus familiaris (Dog) protein is NADH-ubiquinone oxidoreductase chain 6 (MT-ND6).